The following is a 257-amino-acid chain: Hydroxyacylglutathione hydrolase (257 aa).

Zn(2+) contacts are provided by His-58, His-60, Asp-62, His-63, His-116, Asp-135, and His-173.

It belongs to the metallo-beta-lactamase superfamily. Glyoxalase II family. As to quaternary structure, monomer. Requires Zn(2+) as cofactor.

The catalysed reaction is an S-(2-hydroxyacyl)glutathione + H2O = a 2-hydroxy carboxylate + glutathione + H(+). Its pathway is secondary metabolite metabolism; methylglyoxal degradation; (R)-lactate from methylglyoxal: step 2/2. Functionally, thiolesterase that catalyzes the hydrolysis of S-D-lactoyl-glutathione to form glutathione and D-lactic acid. The protein is Hydroxyacylglutathione hydrolase of Brucella melitensis biotype 1 (strain ATCC 23456 / CCUG 17765 / NCTC 10094 / 16M).